Reading from the N-terminus, the 78-residue chain is Acyl carrier protein (78 aa).

The Carrier domain maps to 2–77; it reads STIEERVKKI…AAIDYINGHQ (76 aa). Residue Ser37 is modified to O-(pantetheine 4'-phosphoryl)serine.

This sequence belongs to the acyl carrier protein (ACP) family. Post-translationally, 4'-phosphopantetheine is transferred from CoA to a specific serine of apo-ACP by AcpS. This modification is essential for activity because fatty acids are bound in thioester linkage to the sulfhydryl of the prosthetic group.

It localises to the cytoplasm. It functions in the pathway lipid metabolism; fatty acid biosynthesis. In terms of biological role, carrier of the growing fatty acid chain in fatty acid biosynthesis. The polypeptide is Acyl carrier protein (Erwinia tasmaniensis (strain DSM 17950 / CFBP 7177 / CIP 109463 / NCPPB 4357 / Et1/99)).